A 375-amino-acid chain; its full sequence is Adiponectin receptor protein 1 (375 aa).

The tract at residues Met1–Glu60 is disordered. Topologically, residues Met1–Gly136 are cytoplasmic. A helical membrane pass occupies residues Asn137 to Leu157. At Arg158–Lys170 the chain is on the extracellular side. The helical transmembrane segment at Val171–His191 threads the bilayer. His191 is a binding site for Zn(2+). Topologically, residues Thr192–Thr203 are cytoplasmic. Residues Phe204–Leu224 form a helical membrane-spanning segment. At Tyr225 to Pro234 the chain is on the extracellular side. The helical transmembrane segment at Arg235–Trp255 threads the bilayer. Topologically, residues Asp256–Arg264 are cytoplasmic. A helical transmembrane segment spans residues Gln265–Phe285. The Extracellular segment spans residues Thr286–Gly298. A helical membrane pass occupies residues Gln299–Ala319. The Cytoplasmic portion of the chain corresponds to Arg320 to His337. Residues His337 and His341 each contribute to the Zn(2+) site. The chain crosses the membrane as a helical span at residues Gln338–Leu358. Over Gln359–Leu375 the chain is Extracellular.

Belongs to the ADIPOR family. As to quaternary structure, may form homooligomers and heterooligomers with ADIPOR2. Interacts with APPL2 (via BAR domain); hinders the accessibility of APPL1 to ADIPOR1; negatively regulates adiponectin signaling; ADIPOQ dissociates this interaction and facilitates the recruitment of APPL1 to ADIPOR1. Interacts with APPL1; ADIPOQ enhances this interaction; inhibites adiponectin-stimulated binding of APPL2 to ADIPOR1. In terms of tissue distribution, widely expressed. Highly expressed in heart and skeletal muscle. Expressed at intermediate level in brain, spleen, kidney, liver, placenta, lung and peripheral blood leukocytes. Weakly expressed in colon, thymus and small intestine.

It localises to the cell membrane. Functionally, receptor for ADIPOQ, an essential hormone secreted by adipocytes that regulates glucose and lipid metabolism. Required for normal glucose and fat homeostasis and for maintaining a normal body weight. ADIPOQ-binding activates a signaling cascade that leads to increased AMPK activity, and ultimately to increased fatty acid oxidation, increased glucose uptake and decreased gluconeogenesis. Has high affinity for globular adiponectin and low affinity for full-length adiponectin. The polypeptide is Adiponectin receptor protein 1 (Homo sapiens (Human)).